The sequence spans 326 residues: Vacuolar protein sorting-associated protein 26A-A (326 aa).

The interval 306–326 is disordered; that stretch reads TNFHQRFEPQEPQASAEEPEI. Over residues 315 to 326 the composition is skewed to low complexity; it reads QEPQASAEEPEI.

It belongs to the VPS26 family. As to quaternary structure, component of the heterotrimeric retromer cargo-selective complex (CSC) which is believed to associate with variable sorting nexins to form functionally distinct retromer complex variants.

The protein resides in the cytoplasm. It is found in the endosome membrane. The protein localises to the early endosome. In terms of biological role, acts as a component of the retromer cargo-selective complex (CSC). The CSC is believed to be the core functional component of retromer or respective retromer complex variants acting to prevent missorting of selected transmembrane cargo proteins into the lysosomal degradation pathway. Retromer mediates retrograde transport of cargo proteins from endosomes to the trans-Golgi network (TGN). This chain is Vacuolar protein sorting-associated protein 26A-A (vps26a-a), found in Xenopus laevis (African clawed frog).